The following is a 410-amino-acid chain: Serine hydroxymethyltransferase (410 aa).

(6S)-5,6,7,8-tetrahydrofolate is bound by residues Leu116 and 120–122 (GHL). N6-(pyridoxal phosphate)lysine is present on Lys225. 349 to 351 (SPF) provides a ligand contact to (6S)-5,6,7,8-tetrahydrofolate.

The protein belongs to the SHMT family. As to quaternary structure, homodimer. Requires pyridoxal 5'-phosphate as cofactor.

The protein resides in the cytoplasm. It catalyses the reaction (6R)-5,10-methylene-5,6,7,8-tetrahydrofolate + glycine + H2O = (6S)-5,6,7,8-tetrahydrofolate + L-serine. It participates in one-carbon metabolism; tetrahydrofolate interconversion. Its pathway is amino-acid biosynthesis; glycine biosynthesis; glycine from L-serine: step 1/1. Catalyzes the reversible interconversion of serine and glycine with tetrahydrofolate (THF) serving as the one-carbon carrier. This reaction serves as the major source of one-carbon groups required for the biosynthesis of purines, thymidylate, methionine, and other important biomolecules. Also exhibits THF-independent aldolase activity toward beta-hydroxyamino acids, producing glycine and aldehydes, via a retro-aldol mechanism. This chain is Serine hydroxymethyltransferase, found in Leuconostoc mesenteroides subsp. mesenteroides (strain ATCC 8293 / DSM 20343 / BCRC 11652 / CCM 1803 / JCM 6124 / NCDO 523 / NBRC 100496 / NCIMB 8023 / NCTC 12954 / NRRL B-1118 / 37Y).